We begin with the raw amino-acid sequence, 243 residues long: Flavin-dependent thymidylate synthase (243 aa).

The ThyX domain occupies 2-207 (VKVKLINYTP…ELKPIIEWAK (206 aa)). Residues Ser-56, 80 to 82 (RHR), and Gln-88 contribute to the FAD site. Residues 77–80 (QLVR), 88–92 (QQSQR), and Arg-146 each bind dUMP. A ThyX motif motif is present at residues 80 to 90 (RHRIASYTQQS). FAD-binding positions include 162–164 (NLR) and His-168. DUMP is bound at residue Arg-173. Arg-173 (involved in ionization of N3 of dUMP, leading to its activation) is an active-site residue.

It belongs to the thymidylate synthase ThyX family. Homotetramer. FAD serves as cofactor.

It catalyses the reaction dUMP + (6R)-5,10-methylene-5,6,7,8-tetrahydrofolate + NADPH + H(+) = dTMP + (6S)-5,6,7,8-tetrahydrofolate + NADP(+). The protein operates within pyrimidine metabolism; dTTP biosynthesis. Functionally, catalyzes the reductive methylation of 2'-deoxyuridine-5'-monophosphate (dUMP) to 2'-deoxythymidine-5'-monophosphate (dTMP) while utilizing 5,10-methylenetetrahydrofolate (mTHF) as the methyl donor, and NADPH and FADH(2) as the reductant. This is Flavin-dependent thymidylate synthase from Pyrococcus horikoshii (strain ATCC 700860 / DSM 12428 / JCM 9974 / NBRC 100139 / OT-3).